Here is a 393-residue protein sequence, read N- to C-terminus: Probable hydrolase sll0100 (393 aa).

The protein belongs to the peptidase M20 family.

This Synechocystis sp. (strain ATCC 27184 / PCC 6803 / Kazusa) protein is Probable hydrolase sll0100.